The primary structure comprises 254 residues: Chaperone protein PmfD (254 aa).

A signal peptide spans 1–26 (MNSFSTLKTLFCGSLLALSLVNTTQA).

The protein belongs to the periplasmic pilus chaperone family.

The protein localises to the periplasm. Functionally, involved in the biogenesis of the PMF fimbria. The protein is Chaperone protein PmfD (pmfD) of Proteus mirabilis (strain HI4320).